The following is a 1067-amino-acid chain: Chitinase-like protein C25A8.4 (1067 aa).

A signal peptide spans 1–18 (MGIKTLIWLSILVVGIYC). 3 GH18 domains span residues 26–364 (PVHY…IRNT), 372–727 (CTRL…QVCQ), and 743–1067 (FVVS…HKCR). A disulfide bridge connects residues cysteine 30 and cysteine 51. N-linked (GlcNAc...) asparagine glycosylation is found at asparagine 47 and asparagine 216. An intrachain disulfide couples cysteine 376 to cysteine 397. 3 N-linked (GlcNAc...) asparagine glycosylation sites follow: asparagine 475, asparagine 538, and asparagine 710. Cysteine 747 and cysteine 768 are oxidised to a cystine. Residues asparagine 797 and asparagine 830 are each glycosylated (N-linked (GlcNAc...) asparagine). The active-site Proton donor is glutamate 855. N-linked (GlcNAc...) asparagine glycosylation is found at asparagine 887, asparagine 933, and asparagine 1010.

It belongs to the glycosyl hydrolase 18 family.

Its subcellular location is the secreted. Its function is as follows. Putative chitinase. This Caenorhabditis elegans protein is Chitinase-like protein C25A8.4 (cht-3).